Reading from the N-terminus, the 223-residue chain is uncharacterized protein (223 aa).

The first 22 residues, 1–22 (MHLKKALCPALCTFLIHLCLHA), serve as a signal peptide directing secretion. The VWFA domain maps to 30–204 (DIFLMIDKSR…RSIAAAHSKR (175 aa)). The segment at 199–223 (AAHSKRPTPTPPAKESSPRYTPSLD) is disordered.

This is an uncharacterized protein from Treponema pallidum (strain Nichols).